The chain runs to 1397 residues: Probable cyclin-dependent serine/threonine-protein kinase DDB_G0292550 (1397 aa).

The 284-residue stretch at F4 to F287 folds into the Protein kinase domain. ATP-binding positions include I10–V18 and K33. Residue D124 is the Proton acceptor of the active site. Disordered regions lie at residues N412–N567, P671–F728, N763–N831, N845–H949, N996–N1101, N1115–V1174, N1227–L1324, and K1340–D1397. Residues S676–Q715 are compositionally biased toward low complexity. Composition is skewed to low complexity over residues N845–G941, N1012–N1021, N1028–N1101, and N1115–N1155. The segment covering T1156–N1171 has biased composition (polar residues). Composition is skewed to low complexity over residues N1253 to S1321 and S1354 to Q1380.

It belongs to the protein kinase superfamily. CMGC Ser/Thr protein kinase family. CDC2/CDKX subfamily.

The enzyme catalyses L-seryl-[protein] + ATP = O-phospho-L-seryl-[protein] + ADP + H(+). The catalysed reaction is L-threonyl-[protein] + ATP = O-phospho-L-threonyl-[protein] + ADP + H(+). This chain is Probable cyclin-dependent serine/threonine-protein kinase DDB_G0292550, found in Dictyostelium discoideum (Social amoeba).